Here is a 649-residue protein sequence, read N- to C-terminus: Extracellular metalloproteinase 4 (649 aa).

A signal peptide spans 1–18; the sequence is MHGLLLAGLLALPSNVLG. A propeptide spanning residues 19–260 is cleaved from the precursor; it reads HPAEPPNSVN…VHGVVDYVAS (242 aa). Histidine 443 serves as a coordination point for Zn(2+). Glutamate 444 is an active-site residue. Residue histidine 447 coordinates Zn(2+). Residues asparagine 494 and asparagine 609 are each glycosylated (N-linked (GlcNAc...) asparagine).

The protein belongs to the peptidase M36 family. The cofactor is Zn(2+).

It is found in the secreted. Functionally, secreted metalloproteinase probably acting as a virulence factor. In Arthroderma otae (strain ATCC MYA-4605 / CBS 113480) (Microsporum canis), this protein is Extracellular metalloproteinase 4 (MEP4).